The sequence spans 346 residues: Coproporphyrin III ferrochelatase (346 aa).

Fe-coproporphyrin III contacts are provided by Ser52 and Tyr121. The Fe(2+) site is built by His181 and Glu264.

This sequence belongs to the ferrochelatase family.

The protein localises to the cytoplasm. It catalyses the reaction Fe-coproporphyrin III + 2 H(+) = coproporphyrin III + Fe(2+). Its pathway is porphyrin-containing compound metabolism; protoheme biosynthesis. Its function is as follows. Involved in coproporphyrin-dependent heme b biosynthesis. Catalyzes the insertion of ferrous iron into coproporphyrin III to form Fe-coproporphyrin III. The sequence is that of Coproporphyrin III ferrochelatase from Mycobacterium sp. (strain JLS).